The chain runs to 76 residues: Antimicrobial peptide Smp24 (76 aa).

The N-terminal stretch at 1 to 22 (MQYKTFLVIFMAYLLVTHEAEA) is a signal peptide. Positions 47-76 (SKRKRDVEDFFDPYQRDLDLELERLLSQLQ) are excised as a propeptide.

The protein belongs to the non-disulfide-bridged peptide (NDBP) superfamily. Medium-length antimicrobial peptide (group 3) family. Expressed by the venom gland.

It is found in the secreted. The protein resides in the target cell membrane. Its function is as follows. Peptide that shows antimicrobial activity, moderate cytolysis on eukaryote cells and interference with DNA synthesis. Has potent activity against Gram-positive bacteria and moderate activity against Gram-negative bacteria, as well as moderate activity against fungi. Acts by inducing bacterial membrane disruption. Uses multiple modes of action depending on the membrane lipid composition. Uses a toroidal pore mechanism against the prokaryotic like membrane and forms hexagonal phase non-lamellar structures in eukaryotic-like membrane. Shows activity against B.subtilis (MIC=4 ug/ml), S.epidermidis (MIC=8 ug/ml), S.aureus (MIC=8 ug/ml), E.coli (MIC=64 ug/ml), K.pneumoniae (MIC=128 ug/ml), P.aeruginosa (MIC=256 ug/ml), and C.albicans (MIC=32 ug/ml). Shows moderate hemolysis activity. The sequence is that of Antimicrobial peptide Smp24 from Scorpio palmatus (Israeli golden scorpion).